The following is a 143-amino-acid chain: Small ribosomal subunit protein uS9 (143 aa).

The segment at 124–143 (PEPKKFGGKGARARFQKSYR) is disordered. The span at 134–143 (ARARFQKSYR) shows a compositional bias: basic residues.

This sequence belongs to the universal ribosomal protein uS9 family.

The protein is Small ribosomal subunit protein uS9 (RPS16) of Candida glabrata (strain ATCC 2001 / BCRC 20586 / JCM 3761 / NBRC 0622 / NRRL Y-65 / CBS 138) (Yeast).